Reading from the N-terminus, the 694-residue chain is Beta-mannosyltransferase 8 (694 aa).

Residues 1-11 (MKFPKLRKRTV) lie on the Cytoplasmic side of the membrane. The chain crosses the membrane as a helical span at residues 12–29 (YWAVLTVFALFTIHFVFQ). The Extracellular portion of the chain corresponds to 30 to 694 (YKEHNSHRVQ…YLYDHASVNS (665 aa)). N-linked (GlcNAc...) asparagine glycosylation is found at Asn101 and Asn542.

The protein belongs to the BMT family.

It localises to the membrane. Its function is as follows. Beta-mannosyltransferase involved in cell wall biosynthesis through beta-1,2-mannosylation of cell wall phosphopeptidomannan. Plays a role in the ability to produce hyphae in the presence of three bacterial species. This Candida albicans (strain SC5314 / ATCC MYA-2876) (Yeast) protein is Beta-mannosyltransferase 8 (BMT8).